A 332-amino-acid chain; its full sequence is Malate dehydrogenase, cytoplasmic (332 aa).

Residues Q16–I17, D43, and G90 contribute to the NAD(+) site. R99 serves as a coordination point for oxaloacetate. NAD(+) contacts are provided by Q113 and N132. Positions 132, 163, 188, and 243 each coordinate oxaloacetate. The active-site Proton acceptor is the H188.

This sequence belongs to the LDH/MDH superfamily. MDH type 2 family. In terms of assembly, homodimer.

The protein localises to the cytoplasm. It catalyses the reaction (S)-malate + NAD(+) = oxaloacetate + NADH + H(+). This is Malate dehydrogenase, cytoplasmic (CMDH) from Medicago sativa (Alfalfa).